We begin with the raw amino-acid sequence, 164 residues long: MILILTIIVGFLIYFVTAKRFKLKRLILSICFKTIYNVFKKWWLKFSEEGLKTIVFKRLSKFLKQPYYCNNNVVEYEFHNKKYKLMVNQSLIKKPSYFILNCKEGTGKKEDITLKLQPWIGPEHNFHNTLIKPSDLGYKKLIVVFSIGNKVVVNENDFLPTKLT.

The first 18 residues, 1-18 (MILILTIIVGFLIYFVTA), serve as a signal peptide directing secretion. N-linked (GlcNAc...) asparagine; by host glycosylation occurs at N88.

This sequence belongs to the IIV-6 357R family.

This is an uncharacterized protein from Acheta domesticus (House cricket).